We begin with the raw amino-acid sequence, 317 residues long: Inositol oxygenase 2 (317 aa).

Residues Arg57 and 115–117 (DES) contribute to the substrate site. Fe cation is bound by residues His128, His153, and Asp154. Residues Lys157 and 174-175 (GD) contribute to the substrate site. Residues His226, His252, and Asp285 each coordinate Fe cation. A substrate-binding site is contributed by 252–253 (HS).

It belongs to the myo-inositol oxygenase family. Fe cation serves as cofactor. In terms of tissue distribution, expressed mainly in roots, stems, flowers and siliques. Low expression in leaves.

Its subcellular location is the cytoplasm. It carries out the reaction myo-inositol + O2 = D-glucuronate + H2O + H(+). It functions in the pathway polyol metabolism; myo-inositol degradation into D-glucuronate; D-glucuronate from myo-inositol: step 1/1. In terms of biological role, involved in the biosynthesis of UDP-glucuronic acid (UDP-GlcA), providing nucleotide sugars for cell-wall polymers. May be also involved in plant ascorbate biosynthesis. The chain is Inositol oxygenase 2 (MIOX2) from Arabidopsis thaliana (Mouse-ear cress).